A 225-amino-acid polypeptide reads, in one-letter code: tRNA (guanine-N(1)-)-methyltransferase (225 aa).

S-adenosyl-L-methionine contacts are provided by residues glycine 112 and 132-137 (IGDYVL).

The protein belongs to the RNA methyltransferase TrmD family. In terms of assembly, homodimer.

The protein resides in the cytoplasm. It carries out the reaction guanosine(37) in tRNA + S-adenosyl-L-methionine = N(1)-methylguanosine(37) in tRNA + S-adenosyl-L-homocysteine + H(+). Specifically methylates guanosine-37 in various tRNAs. The chain is tRNA (guanine-N(1)-)-methyltransferase from Porphyromonas gingivalis (strain ATCC 33277 / DSM 20709 / CIP 103683 / JCM 12257 / NCTC 11834 / 2561).